The chain runs to 301 residues: Bifunctional protein FolD (301 aa).

Residues Gly169 to Ser171, Ser194, and Ile235 each bind NADP(+).

It belongs to the tetrahydrofolate dehydrogenase/cyclohydrolase family. As to quaternary structure, homodimer.

The enzyme catalyses (6R)-5,10-methylene-5,6,7,8-tetrahydrofolate + NADP(+) = (6R)-5,10-methenyltetrahydrofolate + NADPH. It carries out the reaction (6R)-5,10-methenyltetrahydrofolate + H2O = (6R)-10-formyltetrahydrofolate + H(+). It participates in one-carbon metabolism; tetrahydrofolate interconversion. Functionally, catalyzes the oxidation of 5,10-methylenetetrahydrofolate to 5,10-methenyltetrahydrofolate and then the hydrolysis of 5,10-methenyltetrahydrofolate to 10-formyltetrahydrofolate. The sequence is that of Bifunctional protein FolD from Gloeothece citriformis (strain PCC 7424) (Cyanothece sp. (strain PCC 7424)).